The primary structure comprises 130 residues: Small ribosomal subunit protein uS11 (130 aa).

The segment at 109–130 (EDVTPIPHDGTGRPGGKRGRRV) is disordered.

This sequence belongs to the universal ribosomal protein uS11 family. In terms of assembly, part of the 30S ribosomal subunit.

Functionally, located on the platform of the 30S subunit. In Methanosphaera stadtmanae (strain ATCC 43021 / DSM 3091 / JCM 11832 / MCB-3), this protein is Small ribosomal subunit protein uS11.